Consider the following 96-residue polypeptide: MAIIEVGRICVKLSGREAGSKCVIVDIIDNNFVLVTGPKSISGVKRRRVNISHLEPTDKTVEIGKGASDQEVEAKLKEQGLVDFMKEKVKVKIPVI.

It belongs to the eukaryotic ribosomal protein eL14 family.

The sequence is that of Large ribosomal subunit protein eL14 from Metallosphaera sedula (strain ATCC 51363 / DSM 5348 / JCM 9185 / NBRC 15509 / TH2).